The following is an 87-amino-acid chain: UPF0473 protein Dred_0776 (87 aa).

Belongs to the UPF0473 family.

This Desulforamulus reducens (strain ATCC BAA-1160 / DSM 100696 / MI-1) (Desulfotomaculum reducens) protein is UPF0473 protein Dred_0776.